A 404-amino-acid polypeptide reads, in one-letter code: Exodeoxyribonuclease 7 large subunit (404 aa).

The protein belongs to the XseA family. As to quaternary structure, heterooligomer composed of large and small subunits.

It localises to the cytoplasm. It catalyses the reaction Exonucleolytic cleavage in either 5'- to 3'- or 3'- to 5'-direction to yield nucleoside 5'-phosphates.. Bidirectionally degrades single-stranded DNA into large acid-insoluble oligonucleotides, which are then degraded further into small acid-soluble oligonucleotides. In Fusobacterium nucleatum subsp. nucleatum (strain ATCC 25586 / DSM 15643 / BCRC 10681 / CIP 101130 / JCM 8532 / KCTC 2640 / LMG 13131 / VPI 4355), this protein is Exodeoxyribonuclease 7 large subunit.